We begin with the raw amino-acid sequence, 156 residues long: Ribosomal RNA large subunit methyltransferase H (156 aa).

Residues Leu73, Gly104, and 123–128 (LSALTL) contribute to the S-adenosyl-L-methionine site.

Belongs to the RNA methyltransferase RlmH family. In terms of assembly, homodimer.

It is found in the cytoplasm. It catalyses the reaction pseudouridine(1915) in 23S rRNA + S-adenosyl-L-methionine = N(3)-methylpseudouridine(1915) in 23S rRNA + S-adenosyl-L-homocysteine + H(+). Functionally, specifically methylates the pseudouridine at position 1915 (m3Psi1915) in 23S rRNA. In Shewanella putrefaciens (strain CN-32 / ATCC BAA-453), this protein is Ribosomal RNA large subunit methyltransferase H.